The primary structure comprises 118 residues: MARIAGVNIPDNKHTEVSLTYIYGIGRTTSRGLCERTGISPQAKVKDLSEEQLDVLRNEIAKMVVEGDLRREVQMNIKRLKDLGCYRGLRHRHSLPVRGQRTKTNARTRKGPRKPIRK.

The segment at H91–K118 is disordered.

This sequence belongs to the universal ribosomal protein uS13 family. Part of the 30S ribosomal subunit. Forms a loose heterodimer with protein S19. Forms two bridges to the 50S subunit in the 70S ribosome.

Its function is as follows. Located at the top of the head of the 30S subunit, it contacts several helices of the 16S rRNA. In the 70S ribosome it contacts the 23S rRNA (bridge B1a) and protein L5 of the 50S subunit (bridge B1b), connecting the 2 subunits; these bridges are implicated in subunit movement. Contacts the tRNAs in the A and P-sites. This Hahella chejuensis (strain KCTC 2396) protein is Small ribosomal subunit protein uS13.